Consider the following 181-residue polypeptide: Ribosome maturation factor RimP (181 aa).

It belongs to the RimP family.

The protein resides in the cytoplasm. Required for maturation of 30S ribosomal subunits. This chain is Ribosome maturation factor RimP, found in Sphingopyxis alaskensis (strain DSM 13593 / LMG 18877 / RB2256) (Sphingomonas alaskensis).